Consider the following 223-residue polypeptide: Type II restriction enzyme BglII (223 aa).

2 residues coordinate Mg(2+): D84 and V94.

As to quaternary structure, homodimer. Mg(2+) serves as cofactor.

The enzyme catalyses Endonucleolytic cleavage of DNA to give specific double-stranded fragments with terminal 5'-phosphates.. In terms of biological role, a P subtype restriction enzyme that recognizes the double-stranded sequence 5'-AGATCT-3' and cleaves after A-1. This chain is Type II restriction enzyme BglII (bglIIR), found in Bacillus subtilis.